Consider the following 784-residue polypeptide: Lon protease (784 aa).

In terms of domain architecture, Lon N-terminal spans 11 to 204; it reads IPVLPLRDVV…YLMAMMESEI (194 aa). 356–363 lines the ATP pocket; sequence GPPGVGKT. In terms of domain architecture, Lon proteolytic spans 592-773; it reads ENRVGQVTGL…EEVLALALQN (182 aa). Active-site residues include Ser679 and Lys722.

This sequence belongs to the peptidase S16 family. Homohexamer. Organized in a ring with a central cavity.

Its subcellular location is the cytoplasm. It catalyses the reaction Hydrolysis of proteins in presence of ATP.. Functionally, ATP-dependent serine protease that mediates the selective degradation of mutant and abnormal proteins as well as certain short-lived regulatory proteins. Required for cellular homeostasis and for survival from DNA damage and developmental changes induced by stress. Degrades polypeptides processively to yield small peptide fragments that are 5 to 10 amino acids long. Binds to DNA in a double-stranded, site-specific manner. The protein is Lon protease of Erwinia amylovora (Fire blight bacteria).